Here is a 347-residue protein sequence, read N- to C-terminus: Probable dual-specificity RNA methyltransferase RlmN (347 aa).

Glu-94 functions as the Proton acceptor in the catalytic mechanism. The region spanning 100 to 334 is the Radical SAM core domain; it reads TETRTTACVS…AKVRHSRGKD (235 aa). A disulfide bridge links Cys-107 with Cys-339. Positions 114, 118, and 121 each coordinate [4Fe-4S] cluster. Residues 165 to 166, Ser-197, 220 to 222, and Asn-296 contribute to the S-adenosyl-L-methionine site; these read GE and SLH. The active-site S-methylcysteine intermediate is the Cys-339.

The protein belongs to the radical SAM superfamily. RlmN family. The cofactor is [4Fe-4S] cluster.

It localises to the cytoplasm. It catalyses the reaction adenosine(2503) in 23S rRNA + 2 reduced [2Fe-2S]-[ferredoxin] + 2 S-adenosyl-L-methionine = 2-methyladenosine(2503) in 23S rRNA + 5'-deoxyadenosine + L-methionine + 2 oxidized [2Fe-2S]-[ferredoxin] + S-adenosyl-L-homocysteine. It carries out the reaction adenosine(37) in tRNA + 2 reduced [2Fe-2S]-[ferredoxin] + 2 S-adenosyl-L-methionine = 2-methyladenosine(37) in tRNA + 5'-deoxyadenosine + L-methionine + 2 oxidized [2Fe-2S]-[ferredoxin] + S-adenosyl-L-homocysteine. In terms of biological role, specifically methylates position 2 of adenine 2503 in 23S rRNA and position 2 of adenine 37 in tRNAs. In Flavobacterium psychrophilum (strain ATCC 49511 / DSM 21280 / CIP 103535 / JIP02/86), this protein is Probable dual-specificity RNA methyltransferase RlmN.